The sequence spans 187 residues: Phosphatidylethanolamine-binding protein 1 (187 aa).

The residue at position 13 (S13) is a Phosphoserine. T42 carries the post-translational modification Phosphothreonine. A phosphoserine mark is found at S52, S98, and S153. An interaction with RAF1 region spans residues 93–134 (KGNDISSGTVLSDYVGSGPPKGTGLHRYVWLVYEQSGPLKCD).

This sequence belongs to the phosphatidylethanolamine-binding protein family. In terms of assembly, has a tendency to form dimers by disulfide cross-linking. Interacts with RAF1 and this interaction is enhanced if RAF1 is phosphorylated on residues 'Ser-338', 'Ser-339', 'Tyr-340' and 'Tyr-341'. Interacts with ALOX15; in response to IL13/interleukin-13, prevents the interaction of PEBP1 with RAF1 to activate the ERK signaling cascade.

The protein localises to the cytoplasm. Binds ATP, opioids and phosphatidylethanolamine. Has lower affinity for phosphatidylinositol and phosphatidylcholine. Serine protease inhibitor which inhibits thrombin, neuropsin and chymotrypsin but not trypsin, tissue type plasminogen activator and elastase. Involved in the positive regulation of epithelial cell migration. Inhibits the kinase activity of RAF1 by inhibiting its activation and by dissociating the RAF1/MEK complex and acting as a competitive inhibitor of MEK phosphorylation. Functionally, HCNP may be involved in the function of the presynaptic cholinergic neurons of the central nervous system. HCNP increases the production of choline acetyltransferase but not acetylcholinesterase. Seems to be mediated by a specific receptor. The chain is Phosphatidylethanolamine-binding protein 1 (PEBP1) from Canis lupus familiaris (Dog).